A 118-amino-acid polypeptide reads, in one-letter code: DNA-binding protein Msp_0595 (118 aa).

Positions 15-44 (LKQQQLAAQQQQGASLEQMQQEEQARQQFE) are enriched in low complexity. The disordered stretch occupies residues 15–45 (LKQQQLAAQQQQGASLEQMQQEEQARQQFEN).

This sequence belongs to the PDCD5 family.

The chain is DNA-binding protein Msp_0595 from Methanosphaera stadtmanae (strain ATCC 43021 / DSM 3091 / JCM 11832 / MCB-3).